A 2196-amino-acid chain; its full sequence is Genome polyprotein (2196 aa).

The N-myristoyl glycine; by host moiety is linked to residue glycine 2. The Cytoplasmic segment spans residues 2–1506; the sequence is GAQVSTQKTG…HVSRAFICLQ (1505 aa). The segment at 568–584 is amphipathic alpha-helix; it reads DLQGDSEHAVESAVSRV. Active-site for protease 2A activity residues include histidine 883 and aspartate 901. Zn(2+) is bound by residues cysteine 918 and cysteine 920. Cysteine 972 acts as the For protease 2A activity in catalysis. The Zn(2+) site is built by cysteine 978 and histidine 980. The interval 1112–1184 is membrane-binding; that stretch reads NNGWLKKFTE…EQSAPSQSDQ (73 aa). Residues 1112–1250 are oligomerization; the sequence is NNGWLKKFTE…SPGAGKSVAT (139 aa). An RNA-binding region spans residues 1133-1137; that stretch reads AIKIQ. Residues 1216 to 1372 enclose the SF3 helicase domain; it reads EKKMSNYIQF…SMYSQNGKIN (157 aa). Cysteine 1380, cysteine 1392, and cysteine 1397 together coordinate Zn(2+). Residues 1380–1397 form a C4-type; degenerate zinc finger; it reads CDEECCPVNFKKCCPLVC. Residues 1424–1431 form an RNA-binding region; sequence EYNHRHSV. The segment at 1435-1440 is oligomerization; that stretch reads LEALFQ. An intramembrane segment occupies 1507 to 1522; it reads ALTTFVSVAGIIYIIY. Topologically, residues 1523–2196 are cytoplasmic; sequence KLFAGFQGAY…TLRRKWLDSF (674 aa). The residue at position 1532 (tyrosine 1532) is an O-(5'-phospho-RNA)-tyrosine. In terms of domain architecture, Peptidase C3 spans 1552–1730; it reads GPAFEFAVAM…FSAALLKHYF (179 aa). Active-site for protease 3C activity residues include histidine 1591, glutamate 1622, and cysteine 1698. A RdRp catalytic domain is found at 1961–2077; it reads GHLIAFDYSG…SYPWPIDASL (117 aa). Positions 1967 and 2063 each coordinate Mg(2+).

It belongs to the picornaviruses polyprotein family. As to quaternary structure, interacts with capsid protein VP1 and capsid protein VP3 to form heterotrimeric protomers. Interacts with capsid protein VP0, and capsid protein VP3 to form heterotrimeric protomers. Five protomers subsequently associate to form pentamers which serve as building blocks for the capsid. Interacts with capsid protein VP2, capsid protein VP3 and capsid protein VP4 following cleavage of capsid protein VP0. In terms of assembly, interacts with capsid protein VP1 and capsid protein VP3 in the mature capsid. As to quaternary structure, interacts with capsid protein VP0 and capsid protein VP1 to form heterotrimeric protomers. Five protomers subsequently associate to form pentamers which serve as building blocks for the capsid. Interacts with capsid protein VP4 in the mature capsid. Interacts with protein 2C; this interaction may be important for virion morphogenesis. Interacts with capsid protein VP1 and capsid protein VP3. In terms of assembly, homodimer. As to quaternary structure, homohexamer; forms a hexameric ring structure with 6-fold symmetry characteristic of AAA+ ATPases. Interacts (via N-terminus) with host RTN3 (via reticulon domain); this interaction is important for viral replication. Interacts with capsid protein VP3; this interaction may be important for virion morphogenesis. Interacts with protein 3CD. In terms of assembly, homodimer. Interacts with host GBF1. Interacts (via GOLD domain) with host ACBD3 (via GOLD domain); this interaction allows the formation of a viral protein 3A/ACBD3 heterotetramer with a 2:2 stoichiometry, which will stimulate the recruitment of host PI4KB in order to synthesize PI4P at the viral RNA replication sites. As to quaternary structure, interacts with RNA-directed RNA polymerase. Interacts with protein 3AB and with RNA-directed RNA polymerase. In terms of assembly, interacts with Viral protein genome-linked and with protein 3CD. Mg(2+) is required as a cofactor. Post-translationally, specific enzymatic cleavages in vivo by the viral proteases yield processing intermediates and the mature proteins. Myristoylation is required for the formation of pentamers during virus assembly. Further assembly of 12 pentamers and a molecule of genomic RNA generates the provirion. In terms of processing, during virion maturation, immature virions are rendered infectious following cleavage of VP0 into VP4 and VP2. This maturation seems to be an autocatalytic event triggered by the presence of RNA in the capsid and it is followed by a conformational change infectious virion. Post-translationally, myristoylation is required during RNA encapsidation and formation of the mature virus particle. VPg is uridylylated by the polymerase into VPg-pUpU. This acts as a nucleotide-peptide primer for the genomic RNA replication.

Its subcellular location is the virion. It localises to the host cytoplasm. It is found in the host cytoplasmic vesicle membrane. The protein localises to the host nucleus. It catalyses the reaction a ribonucleoside 5'-triphosphate + H2O = a ribonucleoside 5'-diphosphate + phosphate + H(+). The catalysed reaction is Selective cleavage of Tyr-|-Gly bond in the picornavirus polyprotein.. It carries out the reaction RNA(n) + a ribonucleoside 5'-triphosphate = RNA(n+1) + diphosphate. The enzyme catalyses Selective cleavage of Gln-|-Gly bond in the poliovirus polyprotein. In other picornavirus reactions Glu may be substituted for Gln, and Ser or Thr for Gly.. Replication or transcription is subject to high level of random mutations by the nucleotide analog ribavirin. Forms an icosahedral capsid of pseudo T=3 symmetry with capsid proteins VP2 and VP3. The capsid is 300 Angstroms in diameter, composed of 60 copies of each capsid protein and enclosing the viral positive strand RNA genome. Capsid protein VP1 mainly forms the vertices of the capsid. Capsid protein VP1 interacts with host cell receptor to provide virion attachment to target host cells. This attachment induces virion internalization. Tyrosine kinases are probably involved in the entry process. After binding to its receptor, the capsid undergoes conformational changes. Capsid protein VP1 N-terminus (that contains an amphipathic alpha-helix) and capsid protein VP4 are externalized. Together, they shape a pore in the host membrane through which viral genome is translocated to host cell cytoplasm. Functionally, forms an icosahedral capsid of pseudo T=3 symmetry with capsid proteins VP2 and VP3. The capsid is 300 Angstroms in diameter, composed of 60 copies of each capsid protein and enclosing the viral positive strand RNA genome. In terms of biological role, lies on the inner surface of the capsid shell. After binding to the host receptor, the capsid undergoes conformational changes. Capsid protein VP4 is released, Capsid protein VP1 N-terminus is externalized, and together, they shape a pore in the host membrane through which the viral genome is translocated into the host cell cytoplasm. Its function is as follows. Component of immature procapsids, which is cleaved into capsid proteins VP4 and VP2 after maturation. Allows the capsid to remain inactive before the maturation step. Cysteine protease that cleaves viral polyprotein and specific host proteins. It is responsible for the autocatalytic cleavage between the P1 and P2 regions, which is the first cleavage occurring in the polyprotein. Also cleaves the host translation initiation factor EIF4G1, in order to shut down the capped cellular mRNA translation. Inhibits the host nucleus-cytoplasm protein and RNA trafficking by cleaving host members of the nuclear pores. Counteracts stress granule formation probably by antagonizing its assembly or promoting its dissassembly. Functionally, plays an essential role in the virus replication cycle by acting as a viroporin. Creates a pore in the host endoplasmic reticulum and as a consequence releases Ca2+ in the cytoplasm of infected cell. In turn, high levels of cytoplasmic calcium may trigger membrane trafficking and transport of viral ER-associated proteins to viroplasms, sites of viral genome replication. In terms of biological role, induces and associates with structural rearrangements of intracellular membranes. Displays RNA-binding, nucleotide binding and NTPase activities. May play a role in virion morphogenesis and viral RNA encapsidation by interacting with the capsid protein VP3. Its function is as follows. Localizes the viral replication complex to the surface of membranous vesicles. Together with protein 3CD binds the Cis-Active RNA Element (CRE) which is involved in RNA synthesis initiation. Acts as a cofactor to stimulate the activity of 3D polymerase, maybe through a nucleid acid chaperone activity. Localizes the viral replication complex to the surface of membranous vesicles. It inhibits host cell endoplasmic reticulum-to-Golgi apparatus transport and causes the disassembly of the Golgi complex, possibly through GBF1 interaction. This would result in depletion of MHC, trail receptors and IFN receptors at the host cell surface. Plays an essential role in viral RNA replication by recruiting ACBD3 and PI4KB at the viral replication sites, thereby allowing the formation of the rearranged membranous structures where viral replication takes place. Functionally, acts as a primer for viral RNA replication and remains covalently bound to viral genomic RNA. VPg is uridylylated prior to priming replication into VPg-pUpU. The oriI viral genomic sequence may act as a template for this. The VPg-pUpU is then used as primer on the genomic RNA poly(A) by the RNA-dependent RNA polymerase to replicate the viral genome. During genome replication, the VPg-RNA linkage is removed by the host TDP2, thereby accelerating replication. During the late stage of the replication cycle, host TDP2 is excluded from sites of viral RNA synthesis and encapsidation, allowing for the generation of progeny virions. In terms of biological role, involved in the viral replication complex and viral polypeptide maturation. It exhibits protease activity with a specificity and catalytic efficiency that is different from protease 3C. Protein 3CD lacks polymerase activity. Protein 3CD binds to the 5'UTR of the viral genome. Its function is as follows. Replicates the viral genomic RNA on the surface of intracellular membranes. May form linear arrays of subunits that propagate along a strong head-to-tail interaction called interface-I. Covalently attaches UMP to a tyrosine of VPg, which is used to prime RNA synthesis. The positive stranded RNA genome is first replicated at virus induced membranous vesicles, creating a dsRNA genomic replication form. This dsRNA is then used as template to synthesize positive stranded RNA genomes. ss(+)RNA genomes are either translated, replicated or encapsidated. Major viral protease that mediates proteolytic processing of the polyprotein. Cleaves host EIF5B, contributing to host translation shutoff. Also cleaves host PABPC1, contributing to host translation shutoff. Cleaves host NLRP1, triggers host N-glycine-mediated degradation of the autoinhibitory NLRP1 N-terminal fragment. The polypeptide is Genome polyprotein (Homo sapiens (Human)).